Reading from the N-terminus, the 533-residue chain is Probable nucleolar protein 5-1 (533 aa).

The 119-residue stretch at 280 to 398 (IAPNLTALVG…LEARLRTLEG (119 aa)) folds into the Nop domain. Residues 402–533 (GRLSGSAKGK…EKKKKKKTEV (132 aa)) form a disordered region. Basic and acidic residues predominate over residues 412–423 (PKIEVYDKDKKK). A compositionally biased stretch (polar residues) spans 433–450 (KTYNTAADSLLQTPTVDS). Composition is skewed to basic and acidic residues over residues 474–489 (TEEP…KTEA) and 515–524 (MPAKKKEKSE).

It belongs to the NOP5/NOP56 family.

The protein localises to the nucleus. It localises to the nucleolus. Functionally, required for 60S ribosomal subunit biogenesis. The polypeptide is Probable nucleolar protein 5-1 (NOP5-1) (Arabidopsis thaliana (Mouse-ear cress)).